A 292-amino-acid chain; its full sequence is Probable endonuclease 4 (292 aa).

Zn(2+)-binding residues include histidine 69, histidine 109, glutamate 145, aspartate 179, histidine 182, histidine 216, aspartate 229, histidine 231, and glutamate 261.

The protein belongs to the AP endonuclease 2 family. The cofactor is Zn(2+).

It catalyses the reaction Endonucleolytic cleavage to 5'-phosphooligonucleotide end-products.. In terms of biological role, endonuclease IV plays a role in DNA repair. It cleaves phosphodiester bonds at apurinic or apyrimidinic (AP) sites, generating a 3'-hydroxyl group and a 5'-terminal sugar phosphate. The sequence is that of Probable endonuclease 4 from Desulfotalea psychrophila (strain LSv54 / DSM 12343).